A 704-amino-acid chain; its full sequence is Inhibitor of carbonic anhydrase (704 aa).

Positions 1-19 (MRLAFCVLLCAGSLGLCLA) are cleaved as a signal peptide. Transferrin-like domains lie at 25–347 (VRWC…HLRR) and 357–689 (VMWC…NVRQ). 16 disulfide bridges follow: Cys-28–Cys-67, Cys-38–Cys-58, Cys-137–Cys-213, Cys-172–Cys-188, Cys-175–Cys-196, Cys-185–Cys-198, Cys-246–Cys-260, Cys-360–Cys-392, Cys-370–Cys-383, Cys-417–Cys-699, Cys-440–Cys-662, Cys-472–Cys-549, Cys-496–Cys-690, Cys-506–Cys-520, Cys-517–Cys-532, and Cys-589–Cys-603. An N-linked (GlcNAc...) asparagine glycan is attached at Asn-491.

The protein belongs to the transferrin family. Monomer. Interacts (via transferrin-like domain 2) with CA2. N-glycosylated. Blood plasma (at protein level).

The protein resides in the secreted. Its function is as follows. Inhibitor for carbonic anhydrase 2 (CA2). Does not bind iron ions. This chain is Inhibitor of carbonic anhydrase, found in Sus scrofa (Pig).